The primary structure comprises 293 residues: Homoserine kinase (293 aa).

83–93 is a binding site for ATP; that stretch reads PITRGMGSSSA.

Belongs to the GHMP kinase family. Homoserine kinase subfamily.

It localises to the cytoplasm. It catalyses the reaction L-homoserine + ATP = O-phospho-L-homoserine + ADP + H(+). It participates in amino-acid biosynthesis; L-threonine biosynthesis; L-threonine from L-aspartate: step 4/5. Functionally, catalyzes the ATP-dependent phosphorylation of L-homoserine to L-homoserine phosphate. The chain is Homoserine kinase from Helicobacter pylori (strain ATCC 700392 / 26695) (Campylobacter pylori).